A 24-amino-acid polypeptide reads, in one-letter code: Brevinin-1SY (24 aa).

An intrachain disulfide couples C18 to C24.

As to expression, expressed by the skin glands.

It localises to the secreted. Its function is as follows. Antibacterial activity against Gram-positive bacterium S.aureus and Gram-negative bacterium E.coli. In Lithobates sylvaticus (Wood frog), this protein is Brevinin-1SY.